The primary structure comprises 91 residues: Small ribosomal subunit protein uS7 (91 aa).

Belongs to the universal ribosomal protein uS7 family. In terms of assembly, part of the 30S ribosomal subunit. Contacts proteins S9 and S11.

In terms of biological role, one of the primary rRNA binding proteins, it binds directly to 16S rRNA where it nucleates assembly of the head domain of the 30S subunit. Is located at the subunit interface close to the decoding center, probably blocks exit of the E-site tRNA. The protein is Small ribosomal subunit protein uS7 (rpsG) of Apple proliferation phytoplasma.